The primary structure comprises 370 residues: Alanine racemase (370 aa).

K39 serves as the catalytic Proton acceptor; specific for D-alanine. At K39 the chain carries N6-(pyridoxal phosphate)lysine. R137 provides a ligand contact to substrate. The active-site Proton acceptor; specific for L-alanine is the Y258. M306 is a substrate binding site.

It belongs to the alanine racemase family. Pyridoxal 5'-phosphate serves as cofactor.

The catalysed reaction is L-alanine = D-alanine. The protein operates within amino-acid biosynthesis; D-alanine biosynthesis; D-alanine from L-alanine: step 1/1. Catalyzes the interconversion of L-alanine and D-alanine. May also act on other amino acids. The sequence is that of Alanine racemase (alr) from Methylobacterium nodulans (strain LMG 21967 / CNCM I-2342 / ORS 2060).